We begin with the raw amino-acid sequence, 347 residues long: Merozoite surface protein 2 (347 aa).

The N-terminal stretch at 1–20 (MKVIKTLSIINFFIFVTFNI) is a signal peptide. N-linked (GlcNAc...) asparagine glycosylation is found at asparagine 22 and asparagine 36. A polymorphic region region spans residues 44–273 (AESKPPTGDG…EQTESPELQS (230 aa)). 22 consecutive repeat copies span residues 53-60 (GAVASAGN), 61-68 (GAVASAGN), 69-76 (GAVASAGN), 77-84 (GAVASAGN), 85-88 (GAGN), 89-92 (GAGN), 93-96 (GAGN), 97-100 (GAGN), 101-104 (GAGN), 105-108 (GAGN), 109-112 (GAGN), 113-116 (GAGN), 117-120 (GAGN), 121-124 (GAGN), 125-128 (GAGN), 129-132 (GAGN), 133-136 (GAGN), 137-140 (GAGN), 141-144 (GAGN), 145-152 (GAVASAGN), 153-156 (GAGN), and 157-164 (GAVASAGN). The interval 53 to 164 (GAVASAGNGA…GNGAVASAGN (112 aa)) is 6 X 8 AA repeats of G-A-V-A-S-A-G-N. Residues 85 to 156 (GAGNGAGNGA…VASAGNGAGN (72 aa)) are 16 X 4 AA repeats of G-A-G-N. A compositionally biased stretch (low complexity) spans 165-206 (GAVAERSSSTPATTTTTTTTNDAEASTSTSSENSNHNNAETN). A disordered region spans residues 165–308 (GAVAERSSST…DSQKECTDGN (144 aa)). Polar residues-rich tracts occupy residues 213-240 (VQPN…NVPR) and 247-275 (KSPT…QSAP). Asparagine 224 is a glycosylation site (N-linked (GlcNAc...) asparagine). Asparagine 296 is a glycosylation site (N-linked (GlcNAc...) asparagine). Cysteine 304 and cysteine 312 are joined by a disulfide. Residues asparagine 320 and asparagine 321 are each glycosylated (N-linked (GlcNAc...) asparagine). Asparagine 321 is lipidated: GPI-anchor amidated asparagine. A propeptide spans 322–347 (SSNIASINKFVVLISATLVLSFAIFI) (removed in mature form).

It localises to the cell membrane. In terms of biological role, may play a role in the merozoite attachment to the erythrocyte. The protein is Merozoite surface protein 2 of Plasmodium falciparum (isolate Nig32 / Nigeria).